Consider the following 147-residue polypeptide: Immunity protein YxxD (147 aa).

Probably interacts with cognate toxin YxiD but not with other non-cognate toxins. The interaction inhibits the toxic activity of YxiD.

It is found in the cytoplasm. Immunity component of one of 6 LXG toxin-immunity modules in this strain. They promote kin selection, mediate competition in biofilms, and drive spatial segregation of different strains, indicating that LXG toxins may help avoid warfare between strains in biofilms. Mediates intercellular competition during biofilm formation; disruption of the operon disadvantages the bacteria, but overexpression of the cognate immunity protein restores growth in competition with wild-type. In situ neutralizes the toxic effect of cognate toxin YxiD. Neutralizes the toxic activity of cognate toxin YxiD upon expression in E.coli. Does not have immunity protein activity on other LXG toxins. The protein is Immunity protein YxxD (yxxD) of Bacillus subtilis (strain 168).